Reading from the N-terminus, the 335-residue chain is Delta(7)-sterol 5(6)-desaturase erg3B (335 aa).

Transmembrane regions (helical) follow at residues 74-94 (IWAF…ALVF), 113-133 (IGQA…LFLA), and 152-172 (LYTY…IYWI). Residues 160 to 284 (LFIAFTDFAI…FITFWDRIGG (125 aa)) form the Fatty acid hydroxylase domain. Positions 173–177 (HRGLH) match the Histidine box-1 motif. Positions 186–190 (HKPHH) match the Histidine box-2 motif. Residues 219 to 239 (PFLFPLQKAAYLGLFVFVTIW) traverse the membrane as a helical segment. N-linked (GlcNAc...) asparagine glycosylation occurs at asparagine 256. The short motif at 261–265 (HTIHH) is the Histidine box-3 element.

It belongs to the sterol desaturase family. Requires Fe cation as cofactor.

It is found in the endoplasmic reticulum membrane. The protein operates within steroid metabolism; ergosterol biosynthesis. Functionally, delta(7)-sterol 5(6)-desaturase; part of the third module of ergosterol biosynthesis pathway that includes the late steps of the pathway. Erg3B catalyzes the introduction of a C-5 double bond in the B ring to produce 5-dehydroepisterol. The third module or late pathway involves the ergosterol synthesis itself through consecutive reactions that mainly occur in the endoplasmic reticulum (ER) membrane. Firstly, the squalene synthase erg9 catalyzes the condensation of 2 farnesyl pyrophosphate moieties to form squalene, which is the precursor of all steroids. Squalene synthase is crucial for balancing the incorporation of farnesyl diphosphate (FPP) into sterol and nonsterol isoprene synthesis. Secondly, squalene is converted into lanosterol by the consecutive action of the squalene epoxidase erg1 and the lanosterol synthase erg7. Then, the delta(24)-sterol C-methyltransferase erg6 methylates lanosterol at C-24 to produce eburicol. Eburicol is the substrate of the sterol 14-alpha demethylase encoded by cyp51A and cyp51B, to yield 4,4,24-trimethyl ergosta-8,14,24(28)-trienol. The C-14 reductase erg24 then reduces the C14=C15 double bond which leads to 4,4-dimethylfecosterol. A sequence of further demethylations at C-4, involving the C-4 demethylation complex containing the C-4 methylsterol oxidases erg25A or erg25B, the sterol-4-alpha-carboxylate 3-dehydrogenase erg26 and the 3-keto-steroid reductase erg27, leads to the production of fecosterol via 4-methylfecosterol. The C-8 sterol isomerase erg2 then catalyzes the reaction which results in unsaturation at C-7 in the B ring of sterols and thus converts fecosterol to episterol. The sterol-C5-desaturase erg3B then catalyzes the introduction of a C-5 double bond in the B ring to produce 5-dehydroepisterol. The 2 other sterol-C5-desaturases, erg3A and erg3C, seem to be less important in ergosterol biosynthesis. The C-22 sterol desaturase erg5 further converts 5-dehydroepisterol into ergosta-5,7,22,24(28)-tetraen-3beta-ol by forming the C-22(23) double bond in the sterol side chain. Finally, ergosta-5,7,22,24(28)-tetraen-3beta-ol is substrate of the C-24(28) sterol reductases erg4A and erg4B to produce ergosterol. Possible alternative sterol biosynthetic pathways might exist from fecosterol to ergosterol, depending on the activities of the erg3 isoforms. In Aspergillus fumigatus (strain ATCC MYA-4609 / CBS 101355 / FGSC A1100 / Af293) (Neosartorya fumigata), this protein is Delta(7)-sterol 5(6)-desaturase erg3B.